The primary structure comprises 396 residues: MSTKDFIEKDYYKVLGVPKDATEAEIKKAYRKLAREFHPDANKGNAKAEERFKEISEANDILGDTKKRKEYDEARTLFGNGGFRPGPGAQGGSFNFDLGDLFGGGAQQGGGAGGGFGGGIGDVFGGLFNRGGAGPGTGTRTQPRRGQDIESEVTLSFTEAVDGATVPLRMSSQAPCKACSGTGDANGTPRVCPTCVGTGQVARGSGGGFSLTDPCPDCKGRGLIAENPCEICKGSGRAKSSRTMQVRIPAGVSDSQRIRLRGKGAPGERGGPAGDLYVVVHVDAHPVFGRKGDNLTVTVPVTFAEAALGGEVKVPTLGGPAVTLKLPPGTPNGRTMRARGKGAVRKDGTRGDLLVTVEVTVPKDVSGKARDALEAYREATAGEDPRAELFQAAKGA.

The 66-residue stretch at 10–75 (DYYKVLGVPK…KKRKEYDEAR (66 aa)) folds into the J domain. The span at 127–137 (LFNRGGAGPGT) shows a compositional bias: gly residues. Residues 127-149 (LFNRGGAGPGTGTRTQPRRGQDI) form a disordered region. A CR-type zinc finger spans residues 163–241 (GATVPLRMSS…CKGSGRAKSS (79 aa)). Positions 176, 179, 192, 195, 215, 218, 229, and 232 each coordinate Zn(2+). CXXCXGXG motif repeat units lie at residues 176–183 (CKACSGTG), 192–199 (CPTCVGTG), 215–222 (CPDCKGRG), and 229–236 (CEICKGSG).

This sequence belongs to the DnaJ family. As to quaternary structure, homodimer. It depends on Zn(2+) as a cofactor.

The protein resides in the cytoplasm. Functionally, participates actively in the response to hyperosmotic and heat shock by preventing the aggregation of stress-denatured proteins and by disaggregating proteins, also in an autonomous, DnaK-independent fashion. Unfolded proteins bind initially to DnaJ; upon interaction with the DnaJ-bound protein, DnaK hydrolyzes its bound ATP, resulting in the formation of a stable complex. GrpE releases ADP from DnaK; ATP binding to DnaK triggers the release of the substrate protein, thus completing the reaction cycle. Several rounds of ATP-dependent interactions between DnaJ, DnaK and GrpE are required for fully efficient folding. Also involved, together with DnaK and GrpE, in the DNA replication of plasmids through activation of initiation proteins. The protein is Chaperone protein DnaJ 1 of Streptomyces avermitilis (strain ATCC 31267 / DSM 46492 / JCM 5070 / NBRC 14893 / NCIMB 12804 / NRRL 8165 / MA-4680).